Consider the following 156-residue polypeptide: Small ribosomal subunit protein uS7 (156 aa).

Belongs to the universal ribosomal protein uS7 family. In terms of assembly, part of the 30S ribosomal subunit. Contacts proteins S9 and S11.

Its function is as follows. One of the primary rRNA binding proteins, it binds directly to 16S rRNA where it nucleates assembly of the head domain of the 30S subunit. Is located at the subunit interface close to the decoding center, probably blocks exit of the E-site tRNA. The protein is Small ribosomal subunit protein uS7 of Klebsiella pneumoniae subsp. pneumoniae (strain ATCC 700721 / MGH 78578).